Reading from the N-terminus, the 332-residue chain is Glycerol-3-phosphate dehydrogenase [NAD(P)+] (332 aa).

Trp-13, Lys-34, and Lys-108 together coordinate NADPH. Sn-glycerol 3-phosphate contacts are provided by Lys-108, Gly-136, and Ser-138. NADPH is bound at residue Ala-140. 5 residues coordinate sn-glycerol 3-phosphate: Lys-191, Asp-244, Ser-254, Arg-255, and Asn-256. The active-site Proton acceptor is Lys-191. Arg-255 is an NADPH binding site. NADPH-binding residues include Val-279 and Glu-281.

Belongs to the NAD-dependent glycerol-3-phosphate dehydrogenase family.

The protein resides in the cytoplasm. The enzyme catalyses sn-glycerol 3-phosphate + NAD(+) = dihydroxyacetone phosphate + NADH + H(+). It catalyses the reaction sn-glycerol 3-phosphate + NADP(+) = dihydroxyacetone phosphate + NADPH + H(+). It functions in the pathway membrane lipid metabolism; glycerophospholipid metabolism. Catalyzes the reduction of the glycolytic intermediate dihydroxyacetone phosphate (DHAP) to sn-glycerol 3-phosphate (G3P), the key precursor for phospholipid synthesis. The chain is Glycerol-3-phosphate dehydrogenase [NAD(P)+] from Francisella tularensis subsp. mediasiatica (strain FSC147).